Here is a 419-residue protein sequence, read N- to C-terminus: MHQIFPSTFFNFEFLRLLGTAPYLGAETGECLATAARIKDGDPESWYQAWYEQAQKALALADEAKAVGDGPGAAWGYIRASNYFRASEFLLHCTPEDPRILSSAVASADAFDKGWILLDGSVRKVEIPYEGGNTLPGRLYLPAPHHQVSGKIPVVVQTGGFDSTQEELYYYGAAGALPRGYAVFSFDGPGQGLSLRKDKLYLRPDWEHVTSKVLDHVIGELAPVHNLDVDRLAVFGASLGGYLSLRAAADPRVKAVVSCDGPLDLFDITRSRMPPWFINGWLSGWLSDGFFNWVIDRLASVNFQLAWEFGHSKWVYGVKTPADVMRTMQKFSLKDGYLSKIKCPTLITGAADSFYFTPQQNAHPIFDSLSALGPAEKHLWIGKDVEGGGLQAKIGALALMHHKMFAWLDETFGIRRDEL.

Serine 238 is a catalytic residue.

It belongs to the AB hydrolase superfamily. FUS2 hydrolase family.

The protein operates within mycotoxin biosynthesis. In terms of biological role, hydrolase; part of the gene cluster that mediates the biosynthesis of the mycotoxin lucilactaene and the lucilactaene-related compound NG-391 that act as cell cycle inhibitors with potent growth inhibitory activity against malarial parasites, moderate growth inhibitory activity against cancer cells, and no activity against bacteria and fungi. Within the pathway, LUC6 may catalyze the 2-pyrrolidone ring formation to form prelucilactaene C from prelucilactaene B, followed by C-15 hydroxylation by the same enzyme to give prelucilactaene D, epoxydation to yield prelucilactaene E, and finally cyclization to yield prelucilactaene F. The pathway begins with the hybrid PKS-NRPS synthetase LUC5 which is responsible for the condensation of one acetyl-coenzyme A (CoA) unit with six malonyl-CoA units and the amide linkage of the arising heptaketide and homoserine, subsequently releasing the first intermediate prelucilactaene B. Both the cytochrome P450 monooxygenase LUC2 and the hydrolase LUC6 function in parallel in modification of prelucilactaene B. LUC6 may catalyze the 2-pyrrolidone ring formation to form prelucilactaene C from prelucilactaene B, followed by C-15 hydroxylation by the same enzyme to give prelucilactaene D, which is then converted to prelucilactaene E by epoxidation, and finally to prelucilactaene F by cyclization. Prelucilactane D, prelucilactaene E, and prelucilactaene F can be converted to dihydrolucilactaene, NG391, and lucilactaene, respectively, via C-20 methyl group hydroxylation by the cytochrome P450 monooxygenase LUC2. However, LUC2, unlike FUS8 in fusarin C biosynthesis, is not enough for the full oxidation of the C-20 methyl group into carboxylic acid, which is a prerequisite for the final methylation step. The aldehyde dehydrogenase LUC3 is involved in the biosynthesis by further oxidation of the C-20 alcoholic analog prelucilactaene G into a carboxylic derivative. This unidentified carboxylic derivative may be converted to demethyllucilactaene. As the last step, the methyltransferase LUC1 methylates the hydroxyl group at C-21 of demethyllucilactaene to generate lucilactaene. The polypeptide is Hydrolase LUC6 (Fusarium sp).